A 498-amino-acid chain; its full sequence is ATP synthase subunit beta, chloroplastic (498 aa).

172 to 179 (GGAGVGKT) is a binding site for ATP.

The protein belongs to the ATPase alpha/beta chains family. F-type ATPases have 2 components, CF(1) - the catalytic core - and CF(0) - the membrane proton channel. CF(1) has five subunits: alpha(3), beta(3), gamma(1), delta(1), epsilon(1). CF(0) has four main subunits: a(1), b(1), b'(1) and c(9-12).

Its subcellular location is the plastid. The protein localises to the chloroplast thylakoid membrane. It catalyses the reaction ATP + H2O + 4 H(+)(in) = ADP + phosphate + 5 H(+)(out). Produces ATP from ADP in the presence of a proton gradient across the membrane. The catalytic sites are hosted primarily by the beta subunits. This is ATP synthase subunit beta, chloroplastic from Agrostis stolonifera (Creeping bentgrass).